The following is a 518-amino-acid chain: 2-isopropylmalate synthase (518 aa).

The region spanning 5–268 is the Pyruvate carboxyltransferase domain; sequence IIIFDTTLRD…DTRINTQEIH (264 aa). Residues aspartate 14, histidine 202, histidine 204, and asparagine 238 each contribute to the Mn(2+) site. Residues 393-518 form a regulatory domain region; it reads TLDVITSQCI…DLKLHKIAGV (126 aa).

It belongs to the alpha-IPM synthase/homocitrate synthase family. LeuA type 1 subfamily. In terms of assembly, homodimer. Mn(2+) serves as cofactor.

Its subcellular location is the cytoplasm. The catalysed reaction is 3-methyl-2-oxobutanoate + acetyl-CoA + H2O = (2S)-2-isopropylmalate + CoA + H(+). Its pathway is amino-acid biosynthesis; L-leucine biosynthesis; L-leucine from 3-methyl-2-oxobutanoate: step 1/4. Its function is as follows. Catalyzes the condensation of the acetyl group of acetyl-CoA with 3-methyl-2-oxobutanoate (2-ketoisovalerate) to form 3-carboxy-3-hydroxy-4-methylpentanoate (2-isopropylmalate). The protein is 2-isopropylmalate synthase of Pasteurella multocida (strain Pm70).